A 236-amino-acid chain; its full sequence is Small ribosomal subunit protein uS2c (236 aa).

Component of the chloroplast small ribosomal subunit (SSU). Mature 70S chloroplast ribosomes of higher plants consist of a small (30S) and a large (50S) subunit. The 30S small subunit contains 1 molecule of ribosomal RNA (16S rRNA) and 24 different proteins. The 50S large subunit contains 3 rRNA molecules (23S, 5S and 4.5S rRNA) and 33 different proteins.

Its subcellular location is the plastid. The protein localises to the chloroplast. Functionally, component of the chloroplast ribosome (chloro-ribosome), a dedicated translation machinery responsible for the synthesis of chloroplast genome-encoded proteins, including proteins of the transcription and translation machinery and components of the photosynthetic apparatus. In Spinacia oleracea (Spinach), this protein is Small ribosomal subunit protein uS2c (rps2).